The primary structure comprises 353 residues: DNA integrity scanning protein DisA (353 aa).

A DAC domain is found at aspartate 6 to serine 144. Residues glycine 73, leucine 91, and threonine 104–threonine 108 contribute to the ATP site.

The protein belongs to the DisA family. As to quaternary structure, homooctamer. Mg(2+) is required as a cofactor.

It carries out the reaction 2 ATP = 3',3'-c-di-AMP + 2 diphosphate. Its function is as follows. Participates in a DNA-damage check-point that is active prior to asymmetric division when DNA is damaged. DisA forms globular foci that rapidly scan along the chromosomes during sporulation, searching for lesions. When a lesion is present, DisA pauses at the lesion site. This triggers a cellular response that culminates in a temporary block in sporulation initiation. Also has diadenylate cyclase activity, catalyzing the condensation of 2 ATP molecules into cyclic di-AMP (c-di-AMP). c-di-AMP acts as a signaling molecule that couples DNA integrity with progression of sporulation. The rise in c-di-AMP level generated by DisA while scanning the chromosome, operates as a positive signal that advances sporulation; upon encountering a lesion, the DisA focus arrests at the damaged site and halts c-di-AMP synthesis. This is DNA integrity scanning protein DisA from Clostridium botulinum (strain Okra / Type B1).